Consider the following 209-residue polypeptide: Uracil phosphoribosyltransferase (209 aa).

5-phospho-alpha-D-ribose 1-diphosphate-binding positions include Arg-79, Arg-104, and 131-139 (DPMLATGGS). Residues Ile-194 and 199–201 (GDA) contribute to the uracil site. 5-phospho-alpha-D-ribose 1-diphosphate is bound at residue Asp-200.

It belongs to the UPRTase family. The cofactor is Mg(2+).

It carries out the reaction UMP + diphosphate = 5-phospho-alpha-D-ribose 1-diphosphate + uracil. Its pathway is pyrimidine metabolism; UMP biosynthesis via salvage pathway; UMP from uracil: step 1/1. Its activity is regulated as follows. Allosterically activated by GTP. In terms of biological role, catalyzes the conversion of uracil and 5-phospho-alpha-D-ribose 1-diphosphate (PRPP) to UMP and diphosphate. This is Uracil phosphoribosyltransferase from Streptococcus thermophilus (strain CNRZ 1066).